The following is a 452-amino-acid chain: NADH-quinone oxidoreductase subunit H (452 aa).

A run of 9 helical transmembrane segments spans residues 28–48, 96–116, 136–156, 177–197, 210–230, 264–286, 301–321, 335–355, and 366–386; these read IILI…LMMI, VIYI…FSVI, LPVA…GIVL, VISY…YAGT, IWFA…MIGE, AEYV…GYLA, WWPA…FVWV, KLGW…VAVI, and YVTA…LWAW.

Belongs to the complex I subunit 1 family. As to quaternary structure, NDH-1 is composed of 14 different subunits. Subunits NuoA, H, J, K, L, M, N constitute the membrane sector of the complex.

The protein localises to the cell membrane. It catalyses the reaction a quinone + NADH + 5 H(+)(in) = a quinol + NAD(+) + 4 H(+)(out). Its function is as follows. NDH-1 shuttles electrons from NADH, via FMN and iron-sulfur (Fe-S) centers, to quinones in the respiratory chain. The immediate electron acceptor for the enzyme in this species is believed to be ubiquinone. Couples the redox reaction to proton translocation (for every two electrons transferred, four hydrogen ions are translocated across the cytoplasmic membrane), and thus conserves the redox energy in a proton gradient. This subunit may bind ubiquinone. In Thermobifida fusca (strain YX), this protein is NADH-quinone oxidoreductase subunit H.